A 281-amino-acid chain; its full sequence is Ribosomal protein L11 methyltransferase (281 aa).

Threonine 133, glycine 154, aspartate 175, and asparagine 216 together coordinate S-adenosyl-L-methionine.

This sequence belongs to the methyltransferase superfamily. PrmA family.

It is found in the cytoplasm. It carries out the reaction L-lysyl-[protein] + 3 S-adenosyl-L-methionine = N(6),N(6),N(6)-trimethyl-L-lysyl-[protein] + 3 S-adenosyl-L-homocysteine + 3 H(+). In terms of biological role, methylates ribosomal protein L11. This Campylobacter jejuni subsp. jejuni serotype O:23/36 (strain 81-176) protein is Ribosomal protein L11 methyltransferase.